Here is a 556-residue protein sequence, read N- to C-terminus: Copine-7 (556 aa).

C2 domains are found at residues 1 to 128 (MSGD…TRPL) and 135 to 262 (NAGK…AQWD). Ca(2+) contacts are provided by Asp168, Asp174, Asp230, Asp232, and Asp238. The VWFA domain maps to 305–504 (HCTVAIDFTA…PALRDIVQFV (200 aa)). The disordered stretch occupies residues 536-556 (KDLPPRSLGGQTGEAGPSSAP).

Belongs to the copine family. Ca(2+) is required as a cofactor.

It localises to the cytoplasm. The protein resides in the nucleus. Its subcellular location is the cell membrane. In terms of biological role, calcium-dependent phospholipid-binding protein that may play a role in calcium-mediated intracellular processes. This Rattus norvegicus (Rat) protein is Copine-7.